A 362-amino-acid chain; its full sequence is Biotin synthase (362 aa).

One can recognise a Radical SAM core domain in the interval 70-305 (CCGNVVDLCS…QQIIRYAGGR (236 aa)). 3 residues coordinate [4Fe-4S] cluster: C88, C92, and C95. [2Fe-2S] cluster contacts are provided by C133, C170, C230, and R300.

This sequence belongs to the radical SAM superfamily. Biotin synthase family. As to quaternary structure, homodimer. The cofactor is [4Fe-4S] cluster. Requires [2Fe-2S] cluster as cofactor.

It catalyses the reaction (4R,5S)-dethiobiotin + (sulfur carrier)-SH + 2 reduced [2Fe-2S]-[ferredoxin] + 2 S-adenosyl-L-methionine = (sulfur carrier)-H + biotin + 2 5'-deoxyadenosine + 2 L-methionine + 2 oxidized [2Fe-2S]-[ferredoxin]. It participates in cofactor biosynthesis; biotin biosynthesis; biotin from 7,8-diaminononanoate: step 2/2. Catalyzes the conversion of dethiobiotin (DTB) to biotin by the insertion of a sulfur atom into dethiobiotin via a radical-based mechanism. This Synechocystis sp. (strain ATCC 27184 / PCC 6803 / Kazusa) protein is Biotin synthase.